A 419-amino-acid chain; its full sequence is MNKHQKPVLTGQRFKTRKRDEKEKFEPTVFRDTLVQGLNEAGDDLEAVAKFLDSTGSRLDYRRYADTLFDILVAGSMLAPGGTRIDDGDKTKMTNHCVFSANEDHETIRNYAQVFNKLIRRYKYLEKAFEDEMKKLLLFLKAFSEAEQTKLAMLSGILLGNGTLPATILTSLFTDSLVKEGIAASFAVKLFKAWMAEKDANSVTSSLRKANLDKRLLELFPVNRQSVDHFAKYFTDAGLKELSDFLRVQQSLGTRKELQKELQERLSQECPIKEVVLYVKEEMKRNDLPETAVIGLLWTCVMNAVEWNKKEELVAEQALKHLKQYAPLLAVFSSQGQSELVLLQKVQEYCYDNIHFMKAFQKIVVLFYKADVLSEEAILKWYKEAHAAKGKSVFLDQMKKFVEWLQNAEEESESEGEES.

A disordered region spans residues 1–22 (MNKHQKPVLTGQRFKTRKRDEK). Lys-117 carries the N6-acetyllysine modification. Residues 248 to 415 (VQQSLGTRKE…QNAEEESESE (168 aa)) enclose the W2 domain. Ser-412, Ser-414, and Ser-419 each carry phosphoserine.

It belongs to the BZW family. As to quaternary structure, interacts with EIF3E, EIF2S2 and EIF3C. In terms of tissue distribution, expressed at high levels in heart, and at lower levels in skeletal muscle, spleen and lung. Expressed at low levels in brain regions where nascent and immature neurons are present.

Its subcellular location is the cytoplasm. Its function is as follows. Translation initiation regulator which represses non-AUG initiated translation and repeat-associated non-AUG (RAN) initiated translation by acting as a competitive inhibitor of eukaryotic translation initiation factor 5 (EIF5) function. Increases the accuracy of translation initiation by impeding EIF5-dependent translation from non-AUG codons by competing with it for interaction with EIF2S2 within the 43S pre-initiation complex (PIC) in an EIF3C-binding dependent manner. This is eIF5-mimic protein 1 (Bzw2) from Rattus norvegicus (Rat).